The following is a 322-amino-acid chain: Lipoyl synthase (322 aa).

[4Fe-4S] cluster-binding residues include Cys69, Cys74, Cys80, Cys95, Cys99, Cys102, and Ser309. The Radical SAM core domain maps to 81–298 (FNHGTATFMI…GVKAKALGFD (218 aa)).

It belongs to the radical SAM superfamily. Lipoyl synthase family. [4Fe-4S] cluster serves as cofactor.

It localises to the cytoplasm. It carries out the reaction [[Fe-S] cluster scaffold protein carrying a second [4Fe-4S](2+) cluster] + N(6)-octanoyl-L-lysyl-[protein] + 2 oxidized [2Fe-2S]-[ferredoxin] + 2 S-adenosyl-L-methionine + 4 H(+) = [[Fe-S] cluster scaffold protein] + N(6)-[(R)-dihydrolipoyl]-L-lysyl-[protein] + 4 Fe(3+) + 2 hydrogen sulfide + 2 5'-deoxyadenosine + 2 L-methionine + 2 reduced [2Fe-2S]-[ferredoxin]. The protein operates within protein modification; protein lipoylation via endogenous pathway; protein N(6)-(lipoyl)lysine from octanoyl-[acyl-carrier-protein]: step 2/2. Catalyzes the radical-mediated insertion of two sulfur atoms into the C-6 and C-8 positions of the octanoyl moiety bound to the lipoyl domains of lipoate-dependent enzymes, thereby converting the octanoylated domains into lipoylated derivatives. The chain is Lipoyl synthase from Psychromonas ingrahamii (strain DSM 17664 / CCUG 51855 / 37).